A 284-amino-acid chain; its full sequence is Four and a half LIM domains protein 5 (284 aa).

The C4-type zinc finger occupies 8–32 (CQYCMASLLGKKYVLKDDNPYCVSC). LIM zinc-binding domains follow at residues 39 to 100 (NYCE…ECSS), 101 to 160 (KCFH…KEFA), 161 to 220 (HYCS…LYAK), and 223 to 283 (AACT…VDTD).

Interacts with CREM (via the third LIM domain). Interacts (via second LIM domain) with SPAG8.

The protein resides in the nucleus. May be involved in the regulation of spermatogenesis. Stimulates CREM transcriptional activity in a phosphorylation-independent manner. The protein is Four and a half LIM domains protein 5 (FHL5) of Bos taurus (Bovine).